The following is a 117-amino-acid chain: Holo-[acyl-carrier-protein] synthase (117 aa).

2 residues coordinate Mg(2+): D8 and E58.

This sequence belongs to the P-Pant transferase superfamily. AcpS family. It depends on Mg(2+) as a cofactor.

Its subcellular location is the cytoplasm. The enzyme catalyses apo-[ACP] + CoA = holo-[ACP] + adenosine 3',5'-bisphosphate + H(+). Its function is as follows. Transfers the 4'-phosphopantetheine moiety from coenzyme A to a Ser of acyl-carrier-protein. This Staphylococcus epidermidis (strain ATCC 35984 / DSM 28319 / BCRC 17069 / CCUG 31568 / BM 3577 / RP62A) protein is Holo-[acyl-carrier-protein] synthase.